The sequence spans 407 residues: Peptidase T (407 aa).

Residue H82 participates in Zn(2+) binding. D84 is a catalytic residue. Residue D143 participates in Zn(2+) binding. E177 (proton acceptor) is an active-site residue. Positions 178, 200, and 382 each coordinate Zn(2+).

This sequence belongs to the peptidase M20B family. Zn(2+) is required as a cofactor.

The protein localises to the cytoplasm. It catalyses the reaction Release of the N-terminal residue from a tripeptide.. Its function is as follows. Cleaves the N-terminal amino acid of tripeptides. In Streptococcus pyogenes serotype M1, this protein is Peptidase T.